Here is a 135-residue protein sequence, read N- to C-terminus: Salivary protein 15 (135 aa).

The signal sequence occupies residues 1-21; the sequence is MESFVAMKVVCILFLVGVVAA. Asparagine 22 carries N-linked (GlcNAc...) asparagine glycosylation. The segment at 48–67 is required for Borrelia OspC-binding; sequence PNYISNHQKLALKLLKICKD. 2 N-linked (GlcNAc...) asparagine glycosylation sites follow: asparagine 92 and asparagine 104. The segment at 116–135 is CD4-binding; the sequence is GPNGQTCAEKNKCVGHIPGC.

It belongs to the salp15 family. Monomer. Interacts with host CD4. Interacts with host DC-SIGN (CD209). As to quaternary structure, (Microbial infection) Interacts with Borrelia outer surface protein C (OspC). In terms of processing, glycosylated. As to expression, expressed in salivary glands. Detected in host skin, at the site of natural inoculation.

The protein localises to the secreted. In terms of biological role, salivary tick protein that downregulates host immune system by binding to both dendritic cells, and CD4(+) T cells. Specifically binds to the CD4 coreceptor on T cells. This interaction prevents the activation of the Src kinase, Lck, and its downstream substrate Zap-70, and results in deficient activation of PLCgamma1, the repression of calcium fluxes triggered by T-cell antigen receptor (TCR) ligation, and a subsequent reduction in interleukin-2 production. This salivary protein also binds to DC-SIGN (CD209) on dendritic cells (DC) and activates the Raf-1 kinase/MEK signaling pathway that results in down-regulating expression of pro-inflammatory cytokines. Furthermore, it inhibits T cell proliferation induced by DCs. It also inhibits in vitro keratinocyte inflammation induced by Borrelia burgdorferi or by the major outer surface protein (OspC) of Borrelia. In addition, it downregulates chemokines and monocyte chemoattractant protein 1, as well as several antimicrobial peptides such as defensins, cathelicidin, psoriasin, and RNase 7. Apart from its immunomodulatory activities, it is also associated with protection of Borrelia spirochetes from antibody-mediated killing through its binding to OspC. In vivo, tests on different immune disease animal models show promising therapeutic results, e.g., in inhibiting HIV infection, experimental autoimmune encephalomyelitis, transplantation rejection, and asthma. Functionally, (Microbial infection) Protects Borrelia garinii (strains A87S and VSBP) from host complement-mediated killing. Its function is as follows. (Microbial infection) Partially protects Borrelia burgdorferi (strains VS215 and B31) from host complement-mediated killing. This is Salivary protein 15 from Ixodes scapularis (Black-legged tick).